Consider the following 175-residue polypeptide: Nucleoside-triphosphatase THEP1 (175 aa).

ATP contacts are provided by residues glycine 16–threonine 23 and valine 103–glycine 110.

It belongs to the THEP1 NTPase family.

It catalyses the reaction a ribonucleoside 5'-triphosphate + H2O = a ribonucleoside 5'-diphosphate + phosphate + H(+). Functionally, has nucleotide phosphatase activity towards ATP, GTP, CTP, TTP and UTP. May hydrolyze nucleoside diphosphates with lower efficiency. This is Nucleoside-triphosphatase THEP1 from Pyrobaculum calidifontis (strain DSM 21063 / JCM 11548 / VA1).